Reading from the N-terminus, the 373-residue chain is Protein SENSITIVE TO PROTON RHIZOTOXICITY 2 (373 aa).

2 consecutive C2H2-type zinc fingers follow at residues His217–His239 and Lys327–His362.

Expressed at low levels in roots (e.g. root tips and lateral roots), leaves (e.g. at the edge of mature leaves, possibly in hydathodes, and in vascular bundles), flowers (e.g. floral filaments), stems, siliques and cotyledons.

It is found in the nucleus. In terms of biological role, probable transcription factor. Together with STOP1, plays a critical role in tolerance to major stress factors in acid soils such as proton H(+) and aluminum ion Al(3+). Required for the expression of genes in response to acidic stress (e.g. ALMT1 and MATE), and Al-activated citrate exudation. This chain is Protein SENSITIVE TO PROTON RHIZOTOXICITY 2, found in Arabidopsis thaliana (Mouse-ear cress).